We begin with the raw amino-acid sequence, 105 residues long: Urease subunit beta (105 aa).

The protein belongs to the urease beta subunit family. As to quaternary structure, heterotrimer of UreA (gamma), UreB (beta) and UreC (alpha) subunits. Three heterotrimers associate to form the active enzyme.

The protein localises to the cytoplasm. It carries out the reaction urea + 2 H2O + H(+) = hydrogencarbonate + 2 NH4(+). Its pathway is nitrogen metabolism; urea degradation; CO(2) and NH(3) from urea (urease route): step 1/1. This is Urease subunit beta from Pseudomonas putida (strain W619).